The primary structure comprises 265 residues: Phosphatidylglycerol--prolipoprotein diacylglyceryl transferase (265 aa).

The next 4 helical transmembrane spans lie at 17-37, 56-76, 92-112, and 117-137; these read LSIR…WLLG, LVTY…MLFY, WQGG…VWFF, and GKGF…GLFA. Residue arginine 139 participates in a 1,2-diacyl-sn-glycero-3-phospho-(1'-sn-glycerol) binding. 3 consecutive transmembrane segments (helical) span residues 173–193, 201–221, and 235–255; these read PSQL…VWLY, GAVS…VELV, and WLTM…WLLA.

Belongs to the Lgt family.

The protein localises to the cell inner membrane. It carries out the reaction L-cysteinyl-[prolipoprotein] + a 1,2-diacyl-sn-glycero-3-phospho-(1'-sn-glycerol) = an S-1,2-diacyl-sn-glyceryl-L-cysteinyl-[prolipoprotein] + sn-glycerol 1-phosphate + H(+). It participates in protein modification; lipoprotein biosynthesis (diacylglyceryl transfer). Catalyzes the transfer of the diacylglyceryl group from phosphatidylglycerol to the sulfhydryl group of the N-terminal cysteine of a prolipoprotein, the first step in the formation of mature lipoproteins. This Solidesulfovibrio magneticus (strain ATCC 700980 / DSM 13731 / RS-1) (Desulfovibrio magneticus) protein is Phosphatidylglycerol--prolipoprotein diacylglyceryl transferase.